Here is a 198-residue protein sequence, read N- to C-terminus: Tumor necrosis factor receptor superfamily member 22 (198 aa).

The Cytoplasmic segment spans residues 1 to 20 (MFGFFCSLVSSLSRWFLWRR). Residues 21–41 (LLLLLLLLLLNLPLQVKFAML) form a helical; Signal-anchor for type II membrane protein membrane-spanning segment. Topologically, residues 42–198 (ELHSFKCPAG…SVVVFRIIRR (157 aa)) are extracellular. TNFR-Cys repeat units lie at residues 47–82 (KCPAGEYWSKDVCCKNCSAGTFVKAPCEIPHTQGQC), 84–124 (KCHP…DRKC), and 125–165 (QCRT…NTVC). 9 cysteine pairs are disulfide-bonded: C48–C59, C60–C73, C63–C82, C85–C100, C103–C116, C106–C124, C126–C141, C144–C157, and C147–C165. Residue N62 is glycosylated (N-linked (GlcNAc...) asparagine). N158 carries N-linked (GlcNAc...) asparagine glycosylation.

In terms of tissue distribution, ubiquitous.

It localises to the cell membrane. The protein resides in the secreted. Functionally, receptor for the cytotoxic ligand TNFSF10/TRAIL. Lacks a cytoplasmic death domain and hence is not capable of inducing apoptosis. Protects cells against TRAIL mediated apoptosis possibly through ligand competition. Cannot induce the NF-kappa-B pathway. This Mus musculus (Mouse) protein is Tumor necrosis factor receptor superfamily member 22 (Tnfrsf22).